The chain runs to 519 residues: Aldehyde dehydrogenase X, mitochondrial (519 aa).

The transit peptide at 1 to 19 directs the protein to the mitochondrion; it reads MLNARFLVPRLLCLQGRTT. Lysine 53 carries the post-translational modification N6-acetyllysine. An N6-acetyllysine; alternate modification is found at lysine 54. Lysine 54 carries the N6-succinyllysine; alternate modification. 264–269 contacts NAD(+); that stretch reads GSTEVG. The Proton acceptor role is filled by glutamate 287. The Nucleophile role is filled by cysteine 321. An N6-acetyllysine; alternate mark is found at lysine 366, lysine 385, lysine 401, and lysine 428. An N6-succinyllysine; alternate mark is found at lysine 366, lysine 385, lysine 401, and lysine 428. At lysine 431 the chain carries N6-acetyllysine.

It belongs to the aldehyde dehydrogenase family. Homotetramer.

Its subcellular location is the mitochondrion matrix. The catalysed reaction is an aldehyde + NAD(+) + H2O = a carboxylate + NADH + 2 H(+). The protein operates within alcohol metabolism; ethanol degradation; acetate from ethanol: step 2/2. Its function is as follows. ALDHs play a major role in the detoxification of alcohol-derived acetaldehyde. They are involved in the metabolism of corticosteroids, biogenic amines, neurotransmitters, and lipid peroxidation. This chain is Aldehyde dehydrogenase X, mitochondrial (Aldh1b1), found in Rattus norvegicus (Rat).